The following is a 119-amino-acid chain: Large ribosomal subunit protein uL22 (119 aa).

The protein belongs to the universal ribosomal protein uL22 family. Part of the 50S ribosomal subunit.

Its function is as follows. This protein binds specifically to 23S rRNA; its binding is stimulated by other ribosomal proteins, e.g. L4, L17, and L20. It is important during the early stages of 50S assembly. It makes multiple contacts with different domains of the 23S rRNA in the assembled 50S subunit and ribosome. Functionally, the globular domain of the protein is located near the polypeptide exit tunnel on the outside of the subunit, while an extended beta-hairpin is found that lines the wall of the exit tunnel in the center of the 70S ribosome. The protein is Large ribosomal subunit protein uL22 of Rickettsia canadensis (strain McKiel).